The sequence spans 336 residues: Type II methyltransferase M2.HphI (336 aa).

This sequence belongs to the N(4)/N(6)-methyltransferase family.

The catalysed reaction is a 2'-deoxyadenosine in DNA + S-adenosyl-L-methionine = an N(6)-methyl-2'-deoxyadenosine in DNA + S-adenosyl-L-homocysteine + H(+). In terms of biological role, an alpha subtype methylase that recognizes the double-stranded sequence 5'-GGTGA-3', probably methylates A-5 on the top strand, and protects the DNA from cleavage by the HphI endonuclease. This Haemophilus parahaemolyticus protein is Type II methyltransferase M2.HphI (hphIBM).